An 80-amino-acid chain; its full sequence is Sulfur carrier protein TusA (80 aa).

Cys-17 functions as the Cysteine persulfide intermediate in the catalytic mechanism.

It belongs to the sulfur carrier protein TusA family.

The protein localises to the cytoplasm. Sulfur carrier protein which probably makes part of a sulfur-relay system. The sequence is that of Sulfur carrier protein TusA from Pseudomonas putida (strain GB-1).